The following is a 246-amino-acid chain: MEPVINFSNVTKEYPLYHHIGSGIKDLVFHPKRAFQLLKGRKYLAIEDISFTVAKGEAVALIGRNGAGKSTSLGLVAGVIKPTKGSVTTHGRVASMLELGGGFHPELTGRENIYLNATLLGLRRKEVQQRMERIIEFSELGEFIDEPIRVYSSGMLAKLGFSVISQVEPDILIIDEVLAVGDISFQAKCIKTIREFKKKGVTILFVSHNMSDVERICDRVVWIENHRLREIGSAERIIELYKQAMA.

An ABC transporter domain is found at 22–246; sequence SGIKDLVFHP…IIELYKQAMA (225 aa). Position 63 to 70 (63 to 70) interacts with ATP; the sequence is GRNGAGKS.

The protein belongs to the ABC transporter superfamily.

The protein localises to the cell inner membrane. Functionally, may form an ATP-driven O-antigen export apparatus, in association with RfbA. The chain is O-antigen export system ATP-binding protein RfbB (rfbB) from Klebsiella pneumoniae.